We begin with the raw amino-acid sequence, 471 residues long: MGETAEGVEAGEKYVSIPQLAGVGTLLSNGGKEIPLSSIEGKRICLFFSAHWCRPCRNFTPKLLQIYRKLRNTCKNMEIIFISLDRDEISFLDYFKGMPWLALPFDTGLRQKLCVQFDIEHIPALIPLSTTLSHGFRVEEDAVKLVEEYGVDAYPFGAKRRSELEGMDDARRQGGNLLQLLGCKEREYVISADGIKTPISDLNGKTIGLYFGAHWCPPCRAFTKQLREAYDELKALRPGNFQVIFISMDRNEEEFQASLSAMPWFAIPYSDTTVQELSRIFTIKGIPTLLILGPDGKVFKTDGRRIISKYGAMAFPFTESRAYELEEVLKKERDSLPHRVRDHRHEHELELDMAKAYLSTQLFHQTPSVQPCRLNLKTLREEYHLIFTNSNRKTSRPQSSYTRQQRDLNNLYSDPKHLPQLHKHFDQSNVATAENSLRFLNGEPENSDISSIHVAFADLAGKIRGEDDKRD.

Thioredoxin domains follow at residues 15–173 and 179–334; these read VSIP…ARRQ and QLLG…KERD.

This sequence belongs to the nucleoredoxin family.

It catalyses the reaction [protein]-dithiol + NAD(+) = [protein]-disulfide + NADH + H(+). The enzyme catalyses [protein]-dithiol + NADP(+) = [protein]-disulfide + NADPH + H(+). In terms of biological role, probable thiol-disulfide oxidoreductase that may participate in various redox reactions. The polypeptide is Probable nucleoredoxin 3 (Oryza sativa subsp. japonica (Rice)).